The chain runs to 229 residues: Adenine nucleotide translocase lysine N-methyltransferase (229 aa).

Residues 1–22 (MDQDDPAEALTELREKRLGLLE) form an N-terminal sequence (NTS) region. Residues 20–42 (LLEIVQAAAGSGLAVYTIWALLL) traverse the membrane as a helical segment. The segment at 43 to 77 (QPGFRRVPLRLQVPYVGASARQVENVLSLLRGRPG) is methyltransferase (MTase). Positions 43–77 (QPGFRRVPLRLQVPYVGASARQVENVLSLLRGRPG) are pre-methyltransferase (preMT).

It belongs to the ANT/ATPSC lysine N-methyltransferase family.

It localises to the mitochondrion membrane. It carries out the reaction L-lysyl-[protein] + 3 S-adenosyl-L-methionine = N(6),N(6),N(6)-trimethyl-L-lysyl-[protein] + 3 S-adenosyl-L-homocysteine + 3 H(+). Functionally, mitochondrial protein-lysine N-methyltransferase that trimethylates adenine nucleotide translocases ANT2/SLC25A5 and ANT3/SLC25A6, thereby regulating mitochondrial respiration. Probably also trimethylates ANT1/SLC25A4. The protein is Adenine nucleotide translocase lysine N-methyltransferase of Mus musculus (Mouse).